The sequence spans 543 residues: Light-independent protochlorophyllide reductase subunit B (543 aa).

A [4Fe-4S] cluster-binding site is contributed by D36. D287 functions as the Proton donor in the catalytic mechanism. A substrate-binding site is contributed by 422–423 (GL).

It belongs to the ChlB/BchB/BchZ family. As to quaternary structure, protochlorophyllide reductase is composed of three subunits; BchL, BchN and BchB. Forms a heterotetramer of two BchB and two BchN subunits. The cofactor is [4Fe-4S] cluster.

The catalysed reaction is chlorophyllide a + oxidized 2[4Fe-4S]-[ferredoxin] + 2 ADP + 2 phosphate = protochlorophyllide a + reduced 2[4Fe-4S]-[ferredoxin] + 2 ATP + 2 H2O. It participates in porphyrin-containing compound metabolism; bacteriochlorophyll biosynthesis (light-independent). Component of the dark-operative protochlorophyllide reductase (DPOR) that uses Mg-ATP and reduced ferredoxin to reduce ring D of protochlorophyllide (Pchlide) to form chlorophyllide a (Chlide). This reaction is light-independent. The NB-protein (BchN-BchB) is the catalytic component of the complex. The chain is Light-independent protochlorophyllide reductase subunit B from Rubrivivax gelatinosus (strain NBRC 100245 / IL144).